A 303-amino-acid chain; its full sequence is Carboxypeptidase B (303 aa).

The Peptidase M14 domain maps to 5–298 (SYHDYDEINA…EGVKVVANFV (294 aa)). The Zn(2+) site is built by histidine 63 and glutamate 66. Substrate contacts are provided by residues 63–66 (HARE), arginine 118, and 136–137 (NR). Histidine 189 is a Zn(2+) binding site. Substrate is bound by residues 190–191 (SY) and tyrosine 241. Residue glutamate 264 is the Proton donor/acceptor of the active site.

The protein belongs to the peptidase M14 family. Requires Zn(2+) as cofactor.

The protein resides in the secreted. It carries out the reaction Preferential release of a C-terminal lysine or arginine amino acid.. The polypeptide is Carboxypeptidase B (Astacus astacus (Noble crayfish)).